Reading from the N-terminus, the 59-residue chain is UPF0434 protein Mmc1_0910 (59 aa).

Belongs to the UPF0434 family.

This Magnetococcus marinus (strain ATCC BAA-1437 / JCM 17883 / MC-1) protein is UPF0434 protein Mmc1_0910.